Consider the following 495-residue polypeptide: Serine/threonine-protein kinase F (495 aa).

The Protein kinase domain maps to 46–314; it reads YLPVKLLGQG…ASAEEVLAVL (269 aa). Residues 52–60 and Lys77 contribute to the ATP site; that span reads LGQGGFGAA. Asp187 (proton acceptor) is an active-site residue. The interval 316 to 354 is disordered; that stretch reads GGKGNQGKAPPGATVSTPQGTNTQIQPTPASSASPLTAP. Positions 329 to 350 are enriched in polar residues; it reads TVSTPQGTNTQIQPTPASSASP.

This sequence belongs to the protein kinase superfamily. Ser/Thr protein kinase family.

The enzyme catalyses L-seryl-[protein] + ATP = O-phospho-L-seryl-[protein] + ADP + H(+). The catalysed reaction is L-threonyl-[protein] + ATP = O-phospho-L-threonyl-[protein] + ADP + H(+). This is Serine/threonine-protein kinase F (spkF) from Synechocystis sp. (strain ATCC 27184 / PCC 6803 / Kazusa).